A 731-amino-acid chain; its full sequence is 1,4-alpha-glucan branching enzyme GlgB (731 aa).

Asp411 serves as the catalytic Nucleophile. Glu464 acts as the Proton donor in catalysis.

Belongs to the glycosyl hydrolase 13 family. GlgB subfamily. In terms of assembly, monomer.

The catalysed reaction is Transfers a segment of a (1-&gt;4)-alpha-D-glucan chain to a primary hydroxy group in a similar glucan chain.. The protein operates within glycan biosynthesis; glycogen biosynthesis. Catalyzes the formation of the alpha-1,6-glucosidic linkages in glycogen by scission of a 1,4-alpha-linked oligosaccharide from growing alpha-1,4-glucan chains and the subsequent attachment of the oligosaccharide to the alpha-1,6 position. The sequence is that of 1,4-alpha-glucan branching enzyme GlgB from Mycobacterium ulcerans (strain Agy99).